The chain runs to 679 residues: Protein polyglycylase TTLL10 (679 aa).

A compositionally biased stretch (basic residues) spans 1–15 (MPLHPPARRPHGHRR). Disordered stretches follow at residues 1-33 (MPLH…GRLS), 49-77 (GHRA…LMPA), and 96-124 (VSFK…RMGS). Polar residues predominate over residues 18–30 (SEAQTEATTQDTG). A compositionally biased stretch (basic residues) spans 96 to 110 (VSFKRPKRSRTHQSH). Residues 172-543 (QGPFFYIGGT…TCQKSLHSQK (372 aa)) form the TTL domain. Residues Lys-304, 310–311 (QG), 353–356 (QRYV), 366–368 (KFD), and 409–410 (TN) each bind ATP. Gln-310 contributes to the a protein binding site. Asp-489, Glu-502, and Asn-504 together coordinate Mg(2+). A disordered region spans residues 605 to 679 (DRPAARKSMS…EQRSTSHRGS (75 aa)).

Mg(2+) serves as cofactor.

It is found in the cytoplasm. The protein resides in the cytoskeleton. Its subcellular location is the cell projection. It localises to the cilium. The protein localises to the cilium axoneme. It catalyses the reaction (glycyl)(n)-glycyl-L-glutamyl-[protein] + glycine + ATP = (glycyl)(n+1)-glycyl-L-glutamyl-[protein] + ADP + phosphate + H(+). Its function is as follows. Polyglycylase which modifies both tubulin and non-tubulin proteins, generating polyglycine side chains of variable lengths on the gamma-carboxyl groups of specific glutamate residues of target proteins. Involved in the elongation step rather than the initiation step of the polyglycylation reaction. Polyglycylates alpha-tubulin and beta-tubulin. Polyglycylates non-tubulin proteins such as nucleosome assembly protein NAP1. This chain is Protein polyglycylase TTLL10, found in Rattus norvegicus (Rat).